An 84-amino-acid chain; its full sequence is Small ribosomal subunit protein uS17 (84 aa).

It belongs to the universal ribosomal protein uS17 family. Part of the 30S ribosomal subunit.

In terms of biological role, one of the primary rRNA binding proteins, it binds specifically to the 5'-end of 16S ribosomal RNA. The protein is Small ribosomal subunit protein uS17 of Clostridioides difficile (strain 630) (Peptoclostridium difficile).